We begin with the raw amino-acid sequence, 97 residues long: UPF0235 protein HD_0778 (97 aa).

This sequence belongs to the UPF0235 family.

In Haemophilus ducreyi (strain 35000HP / ATCC 700724), this protein is UPF0235 protein HD_0778.